Consider the following 591-residue polypeptide: V-type ATP synthase alpha chain (591 aa).

233–240 (GPFGAGKT) is a binding site for ATP.

This sequence belongs to the ATPase alpha/beta chains family.

It catalyses the reaction ATP + H2O + 4 H(+)(in) = ADP + phosphate + 5 H(+)(out). Functionally, produces ATP from ADP in the presence of a proton gradient across the membrane. The V-type alpha chain is a catalytic subunit. This Streptococcus pyogenes serotype M2 (strain MGAS10270) protein is V-type ATP synthase alpha chain.